The following is a 1007-amino-acid chain: Tolloid-like protein 1 (1007 aa).

The first 25 residues, 1 to 25 (MNMPSWLIFLLTGWTFCGNFFACGG), serve as a signal peptide directing secretion. A propeptide spanning residues 26–142 (LDYDYPNYEN…GKSKKIRIPR (117 aa)) is cleaved from the precursor. The disordered stretch occupies residues 115 to 139 (SGQENTTANSQKVDNNQSGKSKKIR). Positions 116–133 (GQENTTANSQKVDNNQSG) are enriched in polar residues. One can recognise a Peptidase M12A domain in the interval 143–342 (AATSRTERIW…AQARKLYRCP (200 aa)). An N-linked (GlcNAc...) asparagine glycan is attached at N164. 4 cysteine pairs are disulfide-bonded: C185–C341, C205–C227, C207–C208, and C344–C370. H235 lines the Zn(2+) pocket. E236 is a catalytic residue. Zn(2+)-binding residues include H239 and H245. CUB domains follow at residues 344-456 (CGET…YEAI) and 457-569 (CGGE…FLKE). N354 and N385 each carry an N-linked (GlcNAc...) asparagine glycan. 15 disulfides stabilise this stretch: C397-C419, C457-C483, C510-C532, C573-C585, C581-C594, C596-C609, C613-C639, C666-C688, C729-C740, C736-C749, C751-C764, C769-C795, C822-C844, C882-C912, and C939-C961. The EGF-like 1; calcium-binding domain occupies 569 to 610 (EEDECARPDNGGCEQRCVNTLGSYKCSCDPGYELAPDKKSCE). In terms of domain architecture, CUB 3 spans 613-725 (CGGLLTKLNG…KGFRAHFFSD (113 aa)). An N-linked (GlcNAc...) asparagine glycan is attached at N621. Residues 725-765 (DKDECSKDNGGCQHECINTIGSYVCQCRNGFVLHDNKHDCK) enclose the EGF-like 2; calcium-binding domain. CUB domains are found at residues 769-881 (CEHR…HSTE) and 882-998 (CGGR…YRSV).

The cofactor is Zn(2+).

The protein resides in the secreted. In terms of biological role, protease which processes procollagen C-propeptides, such as chordin. Required for the embryonic development. Predominant protease, which in the development, influences dorsal-ventral patterning and skeletogenesis. The polypeptide is Tolloid-like protein 1 (tll1) (Xenopus laevis (African clawed frog)).